The chain runs to 252 residues: Fluoroquinolones export permease protein MT2760 (252 aa).

A run of 6 helical transmembrane segments spans residues 31–51 (VMLVIAPVIWTTGVALLTPLF), 69–89 (LILTAFLLLTSIIVAGALAAF), 119–139 (ATVMVVTTIYVVATMSCSGIL), 148–168 (IPIGLVAGLSAVVTLLLILAV), 176–196 (LAMVRALGMLIAGLPCLPWFI), and 224–244 (TWWPYLVGGAVYNLAIVWVLF).

In terms of assembly, the complex is composed of 2 ATP-binding proteins and 2 transmembrane proteins.

It localises to the cell membrane. Functionally, part of the ABC transporter complex involved in fluoroquinolones export. Probably responsible for the translocation of the substrate across the membrane. The polypeptide is Fluoroquinolones export permease protein MT2760 (Mycobacterium tuberculosis (strain CDC 1551 / Oshkosh)).